Reading from the N-terminus, the 1147-residue chain is Tip elongation aberrant protein 1 (1147 aa).

A compositionally biased stretch (basic residues) spans 1 to 16 (MSFLFKRNKGSAHKPT). Residues 1-64 (MSFLFKRNKG…TGSGSHITAS (64 aa)) are disordered. The segment covering 18-32 (PNFSKTSTTPSTSQL) has biased composition (polar residues). Kelch repeat units follow at residues 94 to 144 (EIYI…LIGN), 146 to 198 (FIVF…CLGS), 199 to 253 (KICL…TFSD), 254 to 303 (KLYI…VVEG), 305 to 351 (LYVF…TLSC), and 355 to 402 (TLVL…SNST). Disordered stretches follow at residues 384 to 403 (SVPTTSGRQRNTSFFSNSTG) and 408 to 547 (SAFN…NAQS). Polar residues-rich tracts occupy residues 385 to 403 (VPTTSGRQRNTSFFSNSTG), 408 to 465 (SAFN…SNDL), and 472 to 489 (TRSNSSSILQPSYNLNSH). Positions 502-512 (SSLNSQQLSNQ) are enriched in low complexity. Position 503 is a phosphoserine (S503). A compositionally biased stretch (polar residues) spans 519–547 (VSPTLSFVPSSHSMEQGNGSVASANNAQS). The segment at 538-1147 (SVASANNAQS…AKEPVHDNEN (610 aa)) is interaction with tea4. Coiled coils occupy residues 611-649 (KLYEILRDSASKIDSLTEKLKVANAEKNAALCEAALEKV), 716-838 (QTSS…IIDA), 879-990 (KNNE…ALEE), and 1084-1105 (IKSLSDSVMLLKNQIDDLAKEK). Residues 948 to 1147 (KALEQRNTGA…AKEPVHDNEN (200 aa)) form a retention at microtubule cell ends region.

Major component of the tea1 cell-end complex. Interacts with rax2, tea4 and tip1. Interacts with for3 in the presence of tea4.

The protein localises to the cytoplasm. The protein resides in the cytoskeleton. Cell polarity protein. Acts as an end marker, directing the growth machinery to the cell poles. Involved in the regulation of microtubular organization, affecting the maintenance of a single central axis. Prevents the curling of microtubule tips around the cell ends and is required for the retention of polarity factors such as pom1, tip1 and tea2 at the cell ends, necessary for the cell to grow in a straight line. Links tip1 and tea4 in a common complex. The chain is Tip elongation aberrant protein 1 (tea1) from Schizosaccharomyces pombe (strain 972 / ATCC 24843) (Fission yeast).